The chain runs to 251 residues: Hydroxyacylglutathione hydrolase (251 aa).

His-53, His-55, Asp-57, His-58, His-110, Asp-127, and His-165 together coordinate Zn(2+).

Belongs to the metallo-beta-lactamase superfamily. Glyoxalase II family. As to quaternary structure, monomer. The cofactor is Zn(2+).

The enzyme catalyses an S-(2-hydroxyacyl)glutathione + H2O = a 2-hydroxy carboxylate + glutathione + H(+). Its pathway is secondary metabolite metabolism; methylglyoxal degradation; (R)-lactate from methylglyoxal: step 2/2. Functionally, thiolesterase that catalyzes the hydrolysis of S-D-lactoyl-glutathione to form glutathione and D-lactic acid. The sequence is that of Hydroxyacylglutathione hydrolase from Yersinia pseudotuberculosis serotype IB (strain PB1/+).